Here is a 454-residue protein sequence, read N- to C-terminus: CCA-adding enzyme (454 aa).

Positions 59 and 62 each coordinate ATP. CTP contacts are provided by S59 and R62. Mg(2+) contacts are provided by D71, D73, and D125. Residues H148, K167, and Y176 each contribute to the ATP site. 3 residues coordinate CTP: H148, K167, and Y176.

The protein belongs to the tRNA nucleotidyltransferase/poly(A) polymerase family. Archaeal CCA-adding enzyme subfamily. Homodimer. The cofactor is Mg(2+).

The enzyme catalyses a tRNA precursor + 2 CTP + ATP = a tRNA with a 3' CCA end + 3 diphosphate. It carries out the reaction a tRNA with a 3' CCA end + 2 CTP + ATP = a tRNA with a 3' CCACCA end + 3 diphosphate. Its function is as follows. Catalyzes the addition and repair of the essential 3'-terminal CCA sequence in tRNAs without using a nucleic acid template. Adds these three nucleotides in the order of C, C, and A to the tRNA nucleotide-73, using CTP and ATP as substrates and producing inorganic pyrophosphate. tRNA 3'-terminal CCA addition is required both for tRNA processing and repair. Also involved in tRNA surveillance by mediating tandem CCA addition to generate a CCACCA at the 3' terminus of unstable tRNAs. While stable tRNAs receive only 3'-terminal CCA, unstable tRNAs are marked with CCACCA and rapidly degraded. This is CCA-adding enzyme from Methanosarcina acetivorans (strain ATCC 35395 / DSM 2834 / JCM 12185 / C2A).